Reading from the N-terminus, the 786-residue chain is ATP-dependent RNA helicase SUPV3L1, mitochondrial (786 aa).

Residues 1–22 (MSFSRALLWARLPAGRQAGHRA) constitute a mitochondrion transit peptide. At lysine 99 the chain carries N6-acetyllysine. Residues 194–334 (DARAMQRKII…AIDLVMELMY (141 aa)) form the Helicase ATP-binding domain. Residue 207–214 (GPTNSGKT) participates in ATP binding. Lysine 220 carries the N6-acetyllysine modification. A Helicase C-terminal domain is found at 353 to 518 (VLDHALESLD…GLHPTAEQIE (166 aa)). The interval 650–786 (PDASLIRDLQ…RRKKKEPDSD (137 aa)) is interaction with LAMTOR5, important for protein stability. Disordered stretches follow at residues 690–730 (GFPS…DAGE) and 749–786 (KQLEKEWMTQQTEHNKEKTESGTHPKGTRRKKKEPDSD). Residues 693–705 (SGSQSRLSGTLKS) are compositionally biased toward polar residues. Serine 725 carries the post-translational modification Phosphoserine. Residues 749-771 (KQLEKEWMTQQTEHNKEKTESGT) are compositionally biased toward basic and acidic residues.

It belongs to the helicase family. In terms of assembly, homodimer; in free form. Component of the mitochondrial degradosome (mtEXO) complex which is a heteropentamer containing 2 copies of SUPV3L1 and 3 copies of PNPT1. As part of mitochondrial degradosome complex, interacts with GRSF1 in a RNA-dependent manner; the interaction enhances the activity of the complex. Interacts with LAMTOR5/HBXIP, WRN and BLM. Requires Mg(2+) as cofactor. It depends on Mn(2+) as a cofactor. Broadly expressed.

It is found in the nucleus. The protein resides in the mitochondrion matrix. It localises to the mitochondrion nucleoid. The catalysed reaction is ATP + H2O = ADP + phosphate + H(+). With respect to regulation, helicase activity toward DNA substrate is inhibited by micromolar concentrations of 5,6-dichloro-1-(beta-D-ribofuranosyl)benzotriazole (DRBT) and 4,5,6,7-tetrabromobenzotriazole (TBBT). Helicase activity toward RNA substrate is inhibited by elevated concentrations of TBBT. Inhibited by some ring-expanded nucleoside analogs. Functionally, major helicase player in mitochondrial RNA metabolism. Component of the mitochondrial degradosome (mtEXO) complex, that degrades 3' overhang double-stranded RNA with a 3'-to-5' directionality in an ATP-dependent manner. Involved in the degradation of non-coding mitochondrial transcripts (MT-ncRNA) and tRNA-like molecules. ATPase and ATP-dependent multisubstrate helicase, able to unwind double-stranded (ds) DNA and RNA, and RNA/DNA heteroduplexes in the 5'-to-3' direction. Plays a role in the RNA surveillance system in mitochondria; regulates the stability of mature mRNAs, the removal of aberrantly formed mRNAs and the rapid degradation of non coding processing intermediates. Also implicated in recombination and chromatin maintenance pathways. May protect cells from apoptosis. Associates with mitochondrial DNA. The polypeptide is ATP-dependent RNA helicase SUPV3L1, mitochondrial (SUPV3L1) (Homo sapiens (Human)).